A 335-amino-acid polypeptide reads, in one-letter code: UPF0353 protein MAP_3435c (335 aa).

2 consecutive transmembrane segments (helical) span residues 18–38 (WFFL…VQQF) and 67–87 (VPTI…AGPT). The 197-residue stretch at 98–294 (VVMLVIDVSE…DSLKNVYSTL (197 aa)) folds into the VWFA domain. Residues 309-329 (MAWMLLGAVVLAGAVLAGLLL) traverse the membrane as a helical segment.

The protein belongs to the UPF0353 family.

The protein localises to the cell membrane. The protein is UPF0353 protein MAP_3435c of Mycolicibacterium paratuberculosis (strain ATCC BAA-968 / K-10) (Mycobacterium paratuberculosis).